Consider the following 124-residue polypeptide: Vitelline membrane protein Vm32E (124 aa).

Residues 1-19 (MKTVAFLAVVVLFAAFACA) form the signal peptide. The VM domain maps to 42-81 (SVPAPPCPKNYLFSCQPNLVPAPCAQQAAPAAYGSAGAYT).

This sequence belongs to the vitelline membrane family.

It is found in the secreted. Major early eggshell protein. The chain is Vitelline membrane protein Vm32E from Drosophila pseudoobscura pseudoobscura (Fruit fly).